Consider the following 355-residue polypeptide: Probable F-box protein At5g36000 (355 aa).

Over residues 1–14 (MNTRSGDAEGDIRG) the composition is skewed to basic and acidic residues. A disordered region spans residues 1–44 (MNTRSGDAEGDIRGKMIAPVRDGNGGQKRKLVQSNDIQRDEDGG). Residues 78–124 (QSRFSWYEQDIWTYITRFLDGKSLVKLGATNKWFYKIAMEDTVWRFA) form the F-box; degenerate domain.

In Arabidopsis thaliana (Mouse-ear cress), this protein is Probable F-box protein At5g36000.